We begin with the raw amino-acid sequence, 427 residues long: Glutamate-1-semialdehyde 2,1-aminomutase (427 aa).

K265 bears the N6-(pyridoxal phosphate)lysine mark.

It belongs to the class-III pyridoxal-phosphate-dependent aminotransferase family. HemL subfamily. Homodimer. Requires pyridoxal 5'-phosphate as cofactor.

The protein localises to the cytoplasm. It carries out the reaction (S)-4-amino-5-oxopentanoate = 5-aminolevulinate. Its pathway is porphyrin-containing compound metabolism; protoporphyrin-IX biosynthesis; 5-aminolevulinate from L-glutamyl-tRNA(Glu): step 2/2. This Burkholderia ambifaria (strain MC40-6) protein is Glutamate-1-semialdehyde 2,1-aminomutase.